A 694-amino-acid polypeptide reads, in one-letter code: Long-chain-fatty-acid--CoA ligase 3 (694 aa).

Residues 1-25 (MSEQHSVAVGKAANEHETAPRRNVR) are disordered. Ser2 bears the N-acetylserine mark. ATP is bound at residue 269–280 (YTSGSISAPKGV). Positions 527–576 (DGWFRTGDIVEWTPKGQLKIIDRRKNLVKTLNGEYIALEKLESVYRSNSY) match the FACS motif.

It belongs to the ATP-dependent AMP-binding enzyme family. Interacts with FRK1. Requires Mg(2+) as cofactor.

The protein resides in the cell membrane. It carries out the reaction a long-chain fatty acid + ATP + CoA = a long-chain fatty acyl-CoA + AMP + diphosphate. The enzyme catalyses (9Z)-octadecenoate + ATP + CoA = (9Z)-octadecenoyl-CoA + AMP + diphosphate. The catalysed reaction is hexadecanoate + ATP + CoA = hexadecanoyl-CoA + AMP + diphosphate. It catalyses the reaction (9Z)-hexadecenoate + ATP + CoA = (9Z)-hexadecenoyl-CoA + AMP + diphosphate. It carries out the reaction (9Z)-tetradecenoate + ATP + CoA = (9Z)-tetradecenoyl-CoA + AMP + diphosphate. The enzyme catalyses (9Z,12Z)-octadecadienoate + ATP + CoA = (9Z,12Z)-octadecadienoyl-CoA + AMP + diphosphate. Activates endogenous long-chain fatty acids (LCFA) by esterification of the fatty acids into metabolically active CoA-thioesters for subsequent degradation or incorporation into phospholipids. Acts preferentially on C16 and C18 fatty acids with a cis-double bond at C-9-C-10. The polypeptide is Long-chain-fatty-acid--CoA ligase 3 (FAA3) (Saccharomyces cerevisiae (strain ATCC 204508 / S288c) (Baker's yeast)).